The following is a 684-amino-acid chain: Probable pectin methyltransferase QUA2 (684 aa).

Residues 1 to 35 form a disordered region; it reads MSMPLQRGISGVRVSDSSDDLRDSQMKDKTERARS. At 1–86 the chain is on the cytoplasmic side; it reads MSMPLQRGIS…RHRLMLLFLK (86 aa). Over residues 19–35 the composition is skewed to basic and acidic residues; the sequence is DDLRDSQMKDKTERARS. The helical; Signal-anchor for type II membrane protein transmembrane segment at 87-107 threads the bilayer; sequence ISLVLIVVIALAGSFWWTISI. Over 108–684 the chain is Lumenal; sequence STSSRGHVYH…QKPFTKRQSI (577 aa). Residues Asn-161 and Asn-476 are each glycosylated (N-linked (GlcNAc...) asparagine).

This sequence belongs to the methyltransferase superfamily. As to expression, ubiquitous.

It localises to the golgi apparatus membrane. It participates in glycan metabolism; pectin biosynthesis. May be involved in the synthesis of homogalacturonan. Required for normal cell adhesion and plant development. This chain is Probable pectin methyltransferase QUA2 (QUA2), found in Arabidopsis thaliana (Mouse-ear cress).